The chain runs to 174 residues: Cytochrome c-type biogenesis protein CcmE (174 aa).

Topologically, residues methionine 1–arginine 8 are cytoplasmic. The helical; Signal-anchor for type II membrane protein transmembrane segment at leucine 9–alanine 29 threads the bilayer. At leucine 30–glutamine 174 the chain is on the periplasmic side. Residues histidine 131 and tyrosine 135 each contribute to the heme site. The interval lysine 149–glutamine 174 is disordered. Residues leucine 156–glutamine 174 show a composition bias toward basic and acidic residues.

It belongs to the CcmE/CycJ family.

Its subcellular location is the cell inner membrane. Heme chaperone required for the biogenesis of c-type cytochromes. Transiently binds heme delivered by CcmC and transfers the heme to apo-cytochromes in a process facilitated by CcmF and CcmH. The sequence is that of Cytochrome c-type biogenesis protein CcmE from Histophilus somni (strain 2336) (Haemophilus somnus).